The chain runs to 289 residues: N-acetylmuramoyl-L-alanine amidase AmiA (289 aa).

Positions 1-34 (MSTFKLLKTLTSRRQVLKTGLAALTLSGMSHAVA) form a signal peptide, tat-type signal. The interval 36–61 (EETLKTSNGHSKPKTKKTGSKRLVML) is disordered. Over residues 46-55 (SKPKTKKTGS) the composition is skewed to basic residues. Positions 59-273 (VMLDPGHGGI…IATAIANGII (215 aa)) constitute a MurNAc-LAA domain.

It belongs to the N-acetylmuramoyl-L-alanine amidase 3 family. Post-translationally, predicted to be exported by the Tat system. The position of the signal peptide cleavage has not been experimentally proven.

Its subcellular location is the periplasm. It carries out the reaction Hydrolyzes the link between N-acetylmuramoyl residues and L-amino acid residues in certain cell-wall glycopeptides.. Functionally, cell-wall hydrolase involved in septum cleavage during cell division. In Salmonella typhimurium (strain LT2 / SGSC1412 / ATCC 700720), this protein is N-acetylmuramoyl-L-alanine amidase AmiA (amiA).